Reading from the N-terminus, the 503-residue chain is Lactation elevated protein 1 homolog B (503 aa).

The tract at residues 108 to 155 is disordered; that stretch reads LQNQPTSELQDKVGSRETVNICRPDENVSNEKEDQQEESSKPHPPQGY. A compositionally biased stretch (basic and acidic residues) spans 130-148; it reads RPDENVSNEKEDQQEESSK. Position 159–166 (159–166) interacts with ATP; the sequence is GNVGTGKT.

It belongs to the AFG1 ATPase family.

This chain is Lactation elevated protein 1 homolog B (lace1b), found in Danio rerio (Zebrafish).